The following is a 1130-amino-acid chain: Transmembrane channel-like protein 3 (1130 aa).

Residues 1–148 are Cytoplasmic-facing; that stretch reads MKTSKASQRY…ASYFIFLRWL (148 aa). A helical transmembrane segment spans residues 149-169; it reads FGINIVLTVMTGAFVVLPELI. The Extracellular segment spans residues 170–192; the sequence is AGQPFGSTASKTIPREQITSAQD. A helical membrane pass occupies residues 193-213; the sequence is LDTVWSLGGYLQYSVLFYGYY. The Cytoplasmic segment spans residues 214–225; it reads GRERRIGRAGYR. Residues 226–246 traverse the membrane as a helical segment; sequence LPLAYFLVGMAVFAYSFIVLL. Over 247–319 the chain is Extracellular; the sequence is KRMAKNSRTS…KNMAVTVCLR (73 aa). An N-linked (GlcNAc...) asparagine glycan is attached at asparagine 264. A helical membrane pass occupies residues 320–340; it reads IIANILVLLSLAGSIYLIYFV. Residues 341–361 lie on the Cytoplasmic side of the membrane; sequence VDRSQKLEQSKKELTLWEKNE. A helical membrane pass occupies residues 362 to 382; it reads VSVVVSLVTMLAPSAFDLIAA. At 383–393 the chain is on the extracellular side; that stretch reads LEMYHPRTTLR. A helical membrane pass occupies residues 394 to 414; the sequence is FQLARVLVLYLGNLYSLIIAL. At 415-509 the chain is on the cytoplasmic side; that stretch reads LDKVNSMNIE…CWETYVGQEM (95 aa). A helical membrane pass occupies residues 510 to 530; that stretch reads LKLSVIDMLFTVASILLIDFF. At 531–570 the chain is on the extracellular side; the sequence is RGLFVRYLSDYWCWDLESKFPEYGEFKIAENVLHLVYNQG. Residues 571 to 591 form a helical membrane-spanning segment; that stretch reads MIWMGAFFSPCLPAFNVLKLI. Residues 592-619 lie on the Cytoplasmic side of the membrane; sequence GLMYLRSWAVLTCNVPHQQVFRASRSNN. The helical transmembrane segment at 620 to 640 threads the bilayer; the sequence is FYLAMLLFMLFLCMLPTIFAI. Over 641–680 the chain is Extracellular; the sequence is VHYKPSLNCGPFSGQEKIYDIVSETIENDFPTWFHAVVGH. The chain crosses the membrane as a helical span at residues 681–701; that stretch reads ISSPVVILPAVLLLFMLIYYL. Over 702 to 1130 the chain is Cytoplasmic; it reads QSIARSLKLS…DLNDLICSNV (429 aa). Disordered regions lie at residues 742 to 774, 819 to 893, 999 to 1019, 1033 to 1059, and 1097 to 1116; these read DARQ…EESS, RSLP…FQPI, SSCF…KYQR, QLER…LKAR, and QGRF…KSRQ. The segment covering 747–767 has biased composition (polar residues); the sequence is GSATEAESSENSKPKTLQARI. Basic and acidic residues predominate over residues 840–850; sequence SRSRPEQDTNR. A compositionally biased stretch (polar residues) spans 856–876; the sequence is CSSTSNLHKNRSCSSVTQTQP. Basic and acidic residues-rich tracts occupy residues 878–890 and 1006–1017; these read KDVR…RKDF and DRSENNTRDPKY. Positions 1097 to 1106 are enriched in polar residues; sequence QGRFPRSASQ.

It belongs to the TMC family. Detected in most neuronal organs and also in some non-neuronal tissues.

The protein localises to the membrane. Probable component of an ion channel. Molecular function hasn't been characterized yet. The sequence is that of Transmembrane channel-like protein 3 from Mus musculus (Mouse).